Reading from the N-terminus, the 203-residue chain is Secreted RxLR effector protein RXLR-C28 (203 aa).

The signal sequence occupies residues 1 to 24 (MKAVKLTAAVVVLFMAPYVPITSS). An N-linked (GlcNAc...) asparagine glycan is attached at Asn-32. The RxLR signature appears at 37 to 40 (RHLR). Residue Asn-193 is glycosylated (N-linked (GlcNAc...) asparagine).

This sequence belongs to the RxLR effector family.

The protein resides in the secreted. It localises to the host cytoplasm. Functionally, secreted effector that does not suppress pattern-triggered immunity (PTI) in plant host. This Plasmopara halstedii (Downy mildew of sunflower) protein is Secreted RxLR effector protein RXLR-C28.